Consider the following 764-residue polypeptide: Acylamino-acid-releasing enzyme (764 aa).

Active-site charge relay system residues include S618, D707, and H739.

This sequence belongs to the peptidase S9C family. As to quaternary structure, homotetramer.

Its subcellular location is the cytoplasm. The protein localises to the nucleus. The enzyme catalyses Cleavage of an N-acetyl or N-formyl amino acid from the N-terminus of a polypeptide.. With respect to regulation, strongly inhibited by the serine protease inhibitor diisopropyl fluorophosphate. Its function is as follows. Catalyzes the hydrolysis of the N-terminal peptide bond of an N-acetylated peptide to generate an N-acetylated amino acid and a peptide with a free N-terminus. Can degrade the glycated RuBisCO (ribulose-1,5-bisphosphate carboxylase/oxygenase) protein but not the native protein. May be involved in the elimination of glycated proteins. Plays a homeostatic role in sustaining the cytoplasmic antioxidative system. May contribute to the elimination of the oxidized proteins in the cytoplasm. In Arabidopsis thaliana (Mouse-ear cress), this protein is Acylamino-acid-releasing enzyme.